The following is a 359-amino-acid chain: Small ribosomal subunit protein mS22 (359 aa).

Residues Arg-40–Lys-65 are disordered. Ser-54 carries the phosphoserine modification. Lys-210 carries the N6-acetyllysine modification.

It belongs to the mitochondrion-specific ribosomal protein mS22 family. As to quaternary structure, component of the mitochondrial ribosome small subunit (28S) which comprises a 12S rRNA and about 30 distinct proteins.

The protein resides in the mitochondrion. This Mus musculus (Mouse) protein is Small ribosomal subunit protein mS22 (Mrps22).